The primary structure comprises 347 residues: Isopentenyl-diphosphate delta-isomerase (347 aa).

11 to 12 (RK) contributes to the substrate binding site. FMN-binding positions include 72–74 (AMT), Ser-102, and Asn-131. Residue Gln-161 participates in substrate binding. Glu-162 provides a ligand contact to Mg(2+). Residues Lys-192, Thr-222, and 287 to 288 (AG) contribute to the FMN site.

This sequence belongs to the IPP isomerase type 2 family. Homooctamer. Dimer of tetramers. The cofactor is FMN. Requires NADPH as cofactor. It depends on Mg(2+) as a cofactor.

The protein localises to the cytoplasm. The enzyme catalyses isopentenyl diphosphate = dimethylallyl diphosphate. Involved in the biosynthesis of isoprenoids. Catalyzes the 1,3-allylic rearrangement of the homoallylic substrate isopentenyl (IPP) to its allylic isomer, dimethylallyl diphosphate (DMAPP). The sequence is that of Isopentenyl-diphosphate delta-isomerase from Lactococcus lactis subsp. lactis (strain IL1403) (Streptococcus lactis).